The sequence spans 320 residues: Glutaminase (320 aa).

Substrate contacts are provided by Ser70, Asn121, Glu165, Asn172, Tyr196, Tyr248, and Val266.

The protein belongs to the glutaminase family. Homotetramer.

The catalysed reaction is L-glutamine + H2O = L-glutamate + NH4(+). The chain is Glutaminase from Mycobacterium marinum (strain ATCC BAA-535 / M).